Reading from the N-terminus, the 605-residue chain is Elongation factor 4 (605 aa).

The tr-type G domain maps to 11–193 (KRIRNFSIIA…QIVTRISPPQ (183 aa)). GTP contacts are provided by residues 23 to 28 (DHGKST) and 140 to 143 (NKVD).

It belongs to the TRAFAC class translation factor GTPase superfamily. Classic translation factor GTPase family. LepA subfamily.

It localises to the cell membrane. The enzyme catalyses GTP + H2O = GDP + phosphate + H(+). In terms of biological role, required for accurate and efficient protein synthesis under certain stress conditions. May act as a fidelity factor of the translation reaction, by catalyzing a one-codon backward translocation of tRNAs on improperly translocated ribosomes. Back-translocation proceeds from a post-translocation (POST) complex to a pre-translocation (PRE) complex, thus giving elongation factor G a second chance to translocate the tRNAs correctly. Binds to ribosomes in a GTP-dependent manner. The chain is Elongation factor 4 from Onion yellows phytoplasma (strain OY-M).